The chain runs to 756 residues: MTSIIKLHTISGAMDESPPCYILQIDDVRILLDCGWDEKFDANFIKELKRQVHTLDAVLLSHPDAYHLGALPYLVGKLGLNCPIYATIPVFKMGQMFMYDLYMSHFNMGDFDLFSLDDVDTAFEKITQLKYNQTVSLKDKGYGISITPLNAGHMIGGTIWKIVKVGEEDIVYATDFNHKKERHLSGCELDRLQRPSLLITDAYNAQYQQARRRARDEKLMTNILQTVRNNGNVLIAVDTAGRVLELAHMLDQLWKNKESGLMAYSLALLNNVSYNVIEFAKSQIEWMSDKLTKAFEGARNNPFQFKHIQLCHSLADVYKLPAGPKVVLASTPDLESGFTRDLFVQWASNANNSIILTTRTSPGTLAMELVENCAPGKQIELDVRRRVDLEGAELEEYLRTQGEKLNPLIVKPDVEEESSSESEDDIEMSVITGKHDIVVRPEGRHHSGFFKSNKRHHVMFPYHEEKVKCDEYGEIINLDDYRIADATGYEFVPMEEQNKENVKKEEPGIGAEQQANGGIVDNDVQLLEKPTKLISQRKTIEVNAQVQRIDFEGRSDGESMLKILSQLRPRRVIVIHGTAEGTQVVARHCEQNVGARVFTPQKGEIIDVTSEIHIYQVRLTEGLVSQLQFQKGKDAEVAWVDGRLGMRVKAIEAPMDVTVEQDASVQEGKTLTLETLADDEIPIHNSVLINELKLSDFKQTLMRNNINSEFSGGVLWCSNGTLALRRVDAGKVAMEGCLSEEYYKIRELLYEQYAIV.

A phosphothreonine mark is found at Thr221 and Thr226.

The protein belongs to the metallo-beta-lactamase superfamily. RNA-metabolizing metallo-beta-lactamase-like family. CPSF2/YSH1 subfamily. In terms of assembly, component of the cleavage and polyadenylation specificity factor (CPSF) complex, composed of at least Clp, Cpsf73, Cpsf100 and Cpsf160. Interacts with Sym and Cpsf73 forming a core cleavage factor required for both polyadenylated and histone mRNA processing. Interacts with Slbp and Lsm11.

The protein resides in the nucleus. Component of the cleavage and polyadenylation specificity factor (CPSF) complex that plays a key role in pre-mRNA 3'-end formation, recognizing the AAUAAA signal sequence and interacting with poly(A) polymerase and other factors to bring about cleavage and poly(A) addition. Required for the cotranscriptional processing of 3'-ends of polyadenylated and histone pre-mRNA. The sequence is that of Probable cleavage and polyadenylation specificity factor subunit 2 (Cpsf100) from Drosophila melanogaster (Fruit fly).